A 421-amino-acid chain; its full sequence is Carboxypeptidase A4 (421 aa).

Residues 1-16 form the signal peptide; that stretch reads MRWILFIGALIGSSIC. The propeptide at 17-113 is activation peptide; the sequence is GQEKFFGDQV…EMQHNEGQER (97 aa). Residues Pro69, Val71, Asn119, Tyr123, His124, Ser125, Glu127, and Phe163 each contribute to the a protein site. Positions 122–416 constitute a Peptidase M14 domain; that stretch reads AYHSLEAIYH…LGLKTIMEHV (295 aa). The Zn(2+) site is built by His181 and Glu184. A protein-binding residues include Arg196, Lys197, and Ser248. Cysteines 250 and 273 form a disulfide. Residue Asn260 is glycosylated (N-linked (GlcNAc...) asparagine). Asp270 is an a protein binding site. Position 308 (His308) interacts with Zn(2+). Glu382 (proton donor/acceptor) is an active-site residue.

Belongs to the peptidase M14 family. As to quaternary structure, monomer. Interacts with LXN. Zn(2+) is required as a cofactor. Fetal expression in the adrenal gland, brain, heart, intestine, kidney, liver and lung. Except for fetal brain that shows no imprinting, expression was found preferentially from the maternal allele.

The protein localises to the secreted. With respect to regulation, inhibited by interaction with the metallocarboxypeptidase inhibitor (MCPI) from N.versicolor that binds to the catalytic zinc ion. Also inhibited by interaction with the S.magnifica carboxypeptidase inhibitor SmCI that penetrates the active site groove and inhibits activity by emulating a C-terminal substrate. Additionally inhibited by a carboxypeptidase inhibitor from H.medicinalis (leech) and R.bursa (tick). Metalloprotease that cleaves hydrophobic C-terminal residues with a preference for -Phe, -Leu, -Ile, -Met, -Tyr and -Val. May function in peptide hormone and/or neuropeptide catabolism. This is Carboxypeptidase A4 (CPA4) from Homo sapiens (Human).